The following is a 308-amino-acid chain: Aspartate carbamoyltransferase catalytic subunit (308 aa).

The carbamoyl phosphate site is built by Arg57 and Thr58. Residue Lys86 participates in L-aspartate binding. Carbamoyl phosphate contacts are provided by Arg107, His135, and Gln138. Positions 168 and 229 each coordinate L-aspartate. Leu268 and Pro269 together coordinate carbamoyl phosphate.

Belongs to the aspartate/ornithine carbamoyltransferase superfamily. ATCase family. In terms of assembly, heterooligomer of catalytic and regulatory chains.

The enzyme catalyses carbamoyl phosphate + L-aspartate = N-carbamoyl-L-aspartate + phosphate + H(+). It participates in pyrimidine metabolism; UMP biosynthesis via de novo pathway; (S)-dihydroorotate from bicarbonate: step 2/3. Functionally, catalyzes the condensation of carbamoyl phosphate and aspartate to form carbamoyl aspartate and inorganic phosphate, the committed step in the de novo pyrimidine nucleotide biosynthesis pathway. The sequence is that of Aspartate carbamoyltransferase catalytic subunit from Pyrococcus furiosus (strain ATCC 43587 / DSM 3638 / JCM 8422 / Vc1).